Reading from the N-terminus, the 206-residue chain is uncharacterized protein (206 aa).

The first 22 residues, 1–22, serve as a signal peptide directing secretion; sequence MPKLRLIGLTLLALSATAVSHA. The 67-residue stretch at 23 to 89 folds into the SH3b domain; sequence EETRYVSDEL…IPLKQLSTEP (67 aa). Residues 169–191 traverse the membrane as a helical segment; it reads IIMQWFMYGGGVLGLGLLLGLVL.

The protein to H.influenzae HI_1605.

It is found in the membrane. This is an uncharacterized protein from Escherichia coli O157:H7.